Reading from the N-terminus, the 98-residue chain is uncharacterized protein (98 aa).

Belongs to the HesB/IscA family.

This is an uncharacterized protein from Staphylococcus aureus (strain USA300).